The chain runs to 388 residues: Proteasomal ubiquitin receptor ADRM1 homolog rpn1302 (388 aa).

The Pru domain maps to 15-132 (RGKYGLVSVK…SLINQLIADP (118 aa)). Disordered stretches follow at residues 202–227 (RASSESNLNGPHATAGENGEDHEEAT) and 368–388 (SDGEVEEEGDVEMRESNEKDE). A compositionally biased stretch (acidic residues) spans 368 to 377 (SDGEVEEEGD). A compositionally biased stretch (basic and acidic residues) spans 378 to 388 (VEMRESNEKDE).

It belongs to the ADRM1 family. In terms of assembly, component of the 19S proteasome regulatory particle complex. The 2 S.pombe rpn13 homologs, rpn1301 and rpn1302 are present at a 0.2-1 ratio.

The protein localises to the cytoplasm. The protein resides in the nucleus. Component of the 26S proteasome, a multiprotein complex involved in the ATP-dependent degradation of ubiquitinated proteins. This complex plays a key role in the maintenance of protein homeostasis by removing misfolded or damaged proteins, which could impair cellular functions, and by removing proteins whose functions are no longer required. Therefore, the proteasome participates in numerous cellular processes, including cell cycle progression, apoptosis, or DNA damage repair. Within the complex, functions as a proteasomal ubiquitin receptor. This Schizosaccharomyces pombe (strain 972 / ATCC 24843) (Fission yeast) protein is Proteasomal ubiquitin receptor ADRM1 homolog rpn1302 (rpn1302).